The primary structure comprises 440 residues: Gap junction gamma-2 protein (440 aa).

At 1–21 the chain is on the cytoplasmic side; sequence MTNMSWSFLTRLLEEIHNHST. A helical transmembrane segment spans residues 22–42; sequence FVGKVWLTVLVVFRIVLTAVG. Over 43–78 the chain is Extracellular; the sequence is GESIYSDEQSKFTCNTRQPGCDNVCYDAFAPLSHVR. Residues 79-99 form a helical membrane-spanning segment; the sequence is FWVFQIVVISTPSVMYLGYAV. Over 100-223 the chain is Cytoplasmic; sequence HRLARASEQE…AQLVVRAAFE (124 aa). The interval 108 to 199 is disordered; it reads QERRRALRRR…TPGPAGQHDG (92 aa). Over residues 112 to 124 the composition is skewed to basic residues; that stretch reads RALRRRPGTRRLP. Residues 136–149 are compositionally biased toward low complexity; that stretch reads PDTTDLGEAEPILA. Over residues 150–173 the composition is skewed to acidic residues; that stretch reads LEEDEDEEPGAPEGPGEDTEEERA. The helical transmembrane segment at 224-244 threads the bilayer; that stretch reads VAFLVGQYLLYGFEVPPFFAC. Residues 245–264 lie on the Extracellular side of the membrane; that stretch reads SRQPCPHVVDCFVSRPTEKT. Residues 265–285 traverse the membrane as a helical segment; that stretch reads VFLLVMYVVSCLCLLLNLCEM. Over 286–440 the chain is Cytoplasmic; sequence AHLGLGSAQD…SRDGKATVWI (155 aa). The segment at 369 to 440 is disordered; sequence DRDSPPCAGL…SRDGKATVWI (72 aa). The residue at position 372 (Ser372) is a Phosphoserine. Residues 388–401 are compositionally biased toward low complexity; sequence VGGLASGTGSATSG.

The protein belongs to the connexin family. Gamma-type subfamily. A connexon is composed of a hexamer of connexins. Interacts with TJP1. In terms of tissue distribution, mainly expressed by oligodendrocytes in the central nervous system (at protein level).

It is found in the cell membrane. It localises to the cell junction. Its subcellular location is the gap junction. One gap junction consists of a cluster of closely packed pairs of transmembrane channels, the connexons, through which materials of low MW diffuse from one cell to a neighboring cell. May play a role in myelination in central and peripheral nervous systems. This Mus musculus (Mouse) protein is Gap junction gamma-2 protein (Gjc2).